Reading from the N-terminus, the 354-residue chain is Guanine nucleotide-binding protein G(i) subunit alpha-1 (354 aa).

Residue Gly2 is the site of N-myristoyl glycine attachment. A lipid anchor (S-palmitoyl cysteine) is attached at Cys3. The G-alpha domain occupies 32 to 354 (REVKLLLLGA…KNNLKDCGLF (323 aa)). A G1 motif region spans residues 35–48 (KLLLLGAGESGKST). GTP-binding positions include 43–48 (ESGKST), 150–151 (DS), and 175–178 (LRTR). Ser47 provides a ligand contact to Mg(2+). Positions 173-181 (DVLRTRVKT) are G2 motif. Thr181 serves as a coordination point for Mg(2+). The interval 196-205 (FKMFDVGGQR) is G3 motif. GTP is bound by residues 200–204 (DVGGQ), 269–272 (NKKD), and Ala326. Residues 265–272 (ILFLNKKD) are G4 motif. The interval 324-329 (TCATDT) is G5 motif.

This sequence belongs to the G-alpha family. G(i/o/t/z) subfamily. Heterotrimeric G proteins are composed of 3 units; alpha, beta and gamma. The alpha chain contains the guanine nucleotide binding site. Part of a spindle orientation complex at least composed of GNAI1, GPSM2 and NUMA1. Identified in complex with the beta subunit GNB1 and the gamma subunit GNG1. Identified in complex with the beta subunit GNB1 and the gamma subunit GNG2. Component of the TAS2R14-GNAI1 complex, consisting of TAS2R14, GNAI1, GNB1 and GNG2; within the complex interacts with TAS2R14; this complex plays a role in the perception of bitterness. GTP binding causes dissociation of the heterotrimer, liberating the individual subunits so that they can interact with downstream effector proteins. Interacts (GDP-bound form) with GPSM1; this inhibits guanine nucleotide exchange and GTP binding. Interacts (GDP-bound form) with GPSM2 (via GoLoco domains); this inhibits guanine nucleotide exchange. Interacts with RGS10; this strongly enhances GTP hydrolysis. Interacts with RGS1 and RGS16; this strongly enhances GTPase activity. Interacts with RGS4. Interacts with RGS12. Interacts (via active GTP- or inactive GDP-bound forms) with RGS14 (via RGS and GoLoco domains). Interacts with RGS3, RGS6, RGS7, RGS8, RGS17, RGS18 and RGS20 (in vitro). Interacts (GDP-bound form) with RIC8A (via C-terminus); promoting GNAI1 folding and association with the plasma membrane. Interacts (inactive GDP-bound form) with NUCB1 (via GBA motif); the interaction leads to activation of GNAI1. Interacts (inactive GDP-bound form) with CCDC88C/DAPLE (via GBA motif); the interaction leads to activation of GNAI1. Interacts (inactive GDP-bound form) with CCDC8A/GIV (via GBA motif). Interacts with GPR15. In terms of processing, myristoylation at Gly-2 is required for membrane anchoring before palmitoylation. Post-translationally, palmitoylation at Cys-3 varies with membrane lipid composition.

The protein localises to the nucleus. Its subcellular location is the cytoplasm. It is found in the cell membrane. The protein resides in the cytoskeleton. It localises to the microtubule organizing center. The protein localises to the centrosome. Its subcellular location is the cell cortex. It is found in the membrane. In terms of biological role, guanine nucleotide-binding proteins (G proteins) function as transducers downstream of G protein-coupled receptors (GPCRs) in numerous signaling cascades. The alpha chain contains the guanine nucleotide binding site and alternates between an active, GTP-bound state and an inactive, GDP-bound state. Signaling by an activated GPCR promotes GDP release and GTP binding. The alpha subunit has a low GTPase activity that converts bound GTP to GDP, thereby terminating the signal. Both GDP release and GTP hydrolysis are modulated by numerous regulatory proteins. Signaling is mediated via effector proteins, such as adenylate cyclase. Inhibits adenylate cyclase activity of ADCY1, ADCY5 and ADCY6, leading to decreased intracellular cAMP levels. The inactive GDP-bound form prevents the association of RGS14 with centrosomes and is required for the translocation of RGS14 from the cytoplasm to the plasma membrane. Required for normal cytokinesis during mitosis. Required for cortical dynein-dynactin complex recruitment during metaphase. This Pongo abelii (Sumatran orangutan) protein is Guanine nucleotide-binding protein G(i) subunit alpha-1 (GNAI1).